The primary structure comprises 412 residues: Imidazolonepropionase (412 aa).

Residues His-76 and His-78 each contribute to the Fe(3+) site. Zn(2+)-binding residues include His-76 and His-78. Positions 85, 148, and 181 each coordinate 4-imidazolone-5-propanoate. Tyr-148 contacts N-formimidoyl-L-glutamate. His-242 contributes to the Fe(3+) binding site. A Zn(2+)-binding site is contributed by His-242. Glu-245 lines the 4-imidazolone-5-propanoate pocket. Asp-317 contacts Fe(3+). Residue Asp-317 coordinates Zn(2+). N-formimidoyl-L-glutamate is bound by residues Asn-319 and Gly-321. Ser-322 contributes to the 4-imidazolone-5-propanoate binding site.

It belongs to the metallo-dependent hydrolases superfamily. HutI family. Zn(2+) is required as a cofactor. Requires Fe(3+) as cofactor.

It is found in the cytoplasm. It catalyses the reaction 4-imidazolone-5-propanoate + H2O = N-formimidoyl-L-glutamate. It functions in the pathway amino-acid degradation; L-histidine degradation into L-glutamate; N-formimidoyl-L-glutamate from L-histidine: step 3/3. Its function is as follows. Catalyzes the hydrolytic cleavage of the carbon-nitrogen bond in imidazolone-5-propanoate to yield N-formimidoyl-L-glutamate. It is the third step in the universal histidine degradation pathway. This chain is Imidazolonepropionase, found in Staphylococcus aureus (strain USA300 / TCH1516).